We begin with the raw amino-acid sequence, 232 residues long: Esterase YpfH (232 aa).

Active-site charge relay system residues include S111, D159, and H191.

This sequence belongs to the AB hydrolase superfamily. AB hydrolase 2 family.

Its function is as follows. Displays esterase activity toward palmitoyl-CoA and pNP-butyrate. In Escherichia coli (strain K12), this protein is Esterase YpfH (ypfH).